The primary structure comprises 428 residues: Dual-specificity RNA methyltransferase RlmN (428 aa).

The span at 1–17 (MPLHRVEALGEPQDRTG) shows a compositional bias: basic and acidic residues. Residues 1–44 (MPLHRVEALGEPQDRTGKTFSGRTNGPISSPLTDTERRMSIPQN) are disordered. The span at 18–33 (KTFSGRTNGPISSPLT) shows a compositional bias: polar residues. The Proton acceptor role is filled by E136. The Radical SAM core domain maps to 142-381 (EDDRGALCVS…APIRMPRGRD (240 aa)). A disulfide bridge links C149 with C386. 3 residues coordinate [4Fe-4S] cluster: C156, C160, and C163. S-adenosyl-L-methionine is bound by residues 212–213 (GE), S244, 266–268 (SLH), and N343. C386 functions as the S-methylcysteine intermediate in the catalytic mechanism.

It belongs to the radical SAM superfamily. RlmN family. [4Fe-4S] cluster serves as cofactor.

The protein localises to the cytoplasm. It carries out the reaction adenosine(2503) in 23S rRNA + 2 reduced [2Fe-2S]-[ferredoxin] + 2 S-adenosyl-L-methionine = 2-methyladenosine(2503) in 23S rRNA + 5'-deoxyadenosine + L-methionine + 2 oxidized [2Fe-2S]-[ferredoxin] + S-adenosyl-L-homocysteine. It catalyses the reaction adenosine(37) in tRNA + 2 reduced [2Fe-2S]-[ferredoxin] + 2 S-adenosyl-L-methionine = 2-methyladenosine(37) in tRNA + 5'-deoxyadenosine + L-methionine + 2 oxidized [2Fe-2S]-[ferredoxin] + S-adenosyl-L-homocysteine. In terms of biological role, specifically methylates position 2 of adenine 2503 in 23S rRNA and position 2 of adenine 37 in tRNAs. m2A2503 modification seems to play a crucial role in the proofreading step occurring at the peptidyl transferase center and thus would serve to optimize ribosomal fidelity. The polypeptide is Dual-specificity RNA methyltransferase RlmN (Rhodospirillum rubrum (strain ATCC 11170 / ATH 1.1.1 / DSM 467 / LMG 4362 / NCIMB 8255 / S1)).